The sequence spans 464 residues: tRNA-2-methylthio-N(6)-dimethylallyladenosine synthase (464 aa).

The 117-residue stretch at 19–135 (GSYWITTFGC…LENLLGKVDL (117 aa)) folds into the MTTase N-terminal domain. [4Fe-4S] cluster contacts are provided by Cys-28, Cys-64, Cys-98, Cys-170, Cys-174, and Cys-177. Residues 156-393 (RESSICGWVN…NELVETTSKQ (238 aa)) form the Radical SAM core domain. A TRAM domain is found at 396 to 464 (ERYLDSIESV…PFSLTGILCL (69 aa)).

The protein belongs to the methylthiotransferase family. MiaB subfamily. Monomer. [4Fe-4S] cluster is required as a cofactor.

It localises to the cytoplasm. It carries out the reaction N(6)-dimethylallyladenosine(37) in tRNA + (sulfur carrier)-SH + AH2 + 2 S-adenosyl-L-methionine = 2-methylsulfanyl-N(6)-dimethylallyladenosine(37) in tRNA + (sulfur carrier)-H + 5'-deoxyadenosine + L-methionine + A + S-adenosyl-L-homocysteine + 2 H(+). Its function is as follows. Catalyzes the methylthiolation of N6-(dimethylallyl)adenosine (i(6)A), leading to the formation of 2-methylthio-N6-(dimethylallyl)adenosine (ms(2)i(6)A) at position 37 in tRNAs that read codons beginning with uridine. The protein is tRNA-2-methylthio-N(6)-dimethylallyladenosine synthase of Prochlorococcus marinus (strain MIT 9215).